The following is a 151-amino-acid chain: Ribonuclease P protein component (151 aa).

The disordered stretch occupies residues 1–62 (MDEKDLATQP…LKGDSAFRRL (62 aa)). Low complexity predominate over residues 28-48 (GAQGAEAQAAEGPLAAHAQGA).

It belongs to the RnpA family. As to quaternary structure, consists of a catalytic RNA component (M1 or rnpB) and a protein subunit.

The enzyme catalyses Endonucleolytic cleavage of RNA, removing 5'-extranucleotides from tRNA precursor.. Functionally, RNaseP catalyzes the removal of the 5'-leader sequence from pre-tRNA to produce the mature 5'-terminus. It can also cleave other RNA substrates such as 4.5S RNA. The protein component plays an auxiliary but essential role in vivo by binding to the 5'-leader sequence and broadening the substrate specificity of the ribozyme. This chain is Ribonuclease P protein component, found in Thermus oshimai.